We begin with the raw amino-acid sequence, 1357 residues long: DNA-directed RNA polymerase subunit beta (1357 aa).

The protein belongs to the RNA polymerase beta chain family. As to quaternary structure, the RNAP catalytic core consists of 2 alpha, 1 beta, 1 beta' and 1 omega subunit. When a sigma factor is associated with the core the holoenzyme is formed, which can initiate transcription.

The enzyme catalyses RNA(n) + a ribonucleoside 5'-triphosphate = RNA(n+1) + diphosphate. DNA-dependent RNA polymerase catalyzes the transcription of DNA into RNA using the four ribonucleoside triphosphates as substrates. This chain is DNA-directed RNA polymerase subunit beta, found in Pseudomonas savastanoi pv. phaseolicola (strain 1448A / Race 6) (Pseudomonas syringae pv. phaseolicola (strain 1448A / Race 6)).